The primary structure comprises 233 residues: Tetrahydromethanopterin S-methyltransferase subunit D (233 aa).

6 helical membrane-spanning segments follow: residues 4 to 24, 39 to 59, 67 to 87, 133 to 153, 166 to 186, and 209 to 229; these read LLLI…VHFV, VGTG…ITAA, LMIM…TMLV, FVSG…IYWA, MGAA…NAVI, and GIVA…LLVY.

The protein belongs to the MtrD family. As to quaternary structure, the complex is composed of 8 subunits; MtrA, MtrB, MtrC, MtrD, MtrE, MtrF, MtrG and MtrH.

The protein resides in the cell membrane. It catalyses the reaction 5-methyl-5,6,7,8-tetrahydromethanopterin + coenzyme M + 2 Na(+)(in) = 5,6,7,8-tetrahydromethanopterin + methyl-coenzyme M + 2 Na(+)(out). It participates in one-carbon metabolism; methanogenesis from CO(2); methyl-coenzyme M from 5,10-methylene-5,6,7,8-tetrahydromethanopterin: step 2/2. Functionally, part of a complex that catalyzes the formation of methyl-coenzyme M and tetrahydromethanopterin from coenzyme M and methyl-tetrahydromethanopterin. This is an energy-conserving, sodium-ion translocating step. This chain is Tetrahydromethanopterin S-methyltransferase subunit D, found in Methanothermobacter marburgensis (strain ATCC BAA-927 / DSM 2133 / JCM 14651 / NBRC 100331 / OCM 82 / Marburg) (Methanobacterium thermoautotrophicum).